A 245-amino-acid chain; its full sequence is MIIPALDLIDGKVVRLYQGDYAQKTVYSDSPQSQFTIYNQQGADWLHLVDLDGAKDVTKRQLKVIASLIANTPAKIQIGGGVRTEQDVQDLLDAGAQRVVIGSTAVKEPAMVAGWMKKYGAEHIVLALDINIDAQGNKIVAVSGWQEASGQTIESLLETYLAVGLKHVLCTDISKDGTLSGSNVSLYKEMAAAYPQVAWQASGGIGSLDDIAAVARSGASGMIVGRALLEGKFTVKEAIFCWENA.

Asp-7 functions as the Proton acceptor in the catalytic mechanism. Asp-129 functions as the Proton donor in the catalytic mechanism.

Belongs to the HisA/HisF family.

It localises to the cytoplasm. The enzyme catalyses 1-(5-phospho-beta-D-ribosyl)-5-[(5-phospho-beta-D-ribosylamino)methylideneamino]imidazole-4-carboxamide = 5-[(5-phospho-1-deoxy-D-ribulos-1-ylimino)methylamino]-1-(5-phospho-beta-D-ribosyl)imidazole-4-carboxamide. It participates in amino-acid biosynthesis; L-histidine biosynthesis; L-histidine from 5-phospho-alpha-D-ribose 1-diphosphate: step 4/9. This is 1-(5-phosphoribosyl)-5-[(5-phosphoribosylamino)methylideneamino] imidazole-4-carboxamide isomerase from Psychromonas ingrahamii (strain DSM 17664 / CCUG 51855 / 37).